Here is a 410-residue protein sequence, read N- to C-terminus: F-box/WD-40 repeat-containing protein 1 (410 aa).

The 48-residue stretch at 32-79 (SKECSLLPFELFEEILCRVPTKSLLRLKLTCKRWLALFNDKRFIYKHL) folds into the F-box domain. WD repeat units lie at residues 109-150 (PNKF…VRWI) and 269-309 (DVHN…NGVS).

The polypeptide is F-box/WD-40 repeat-containing protein 1 (FBW1) (Arabidopsis thaliana (Mouse-ear cress)).